Reading from the N-terminus, the 73-residue chain is MKDHSFYHFALTARGRKDEKGELAEEIFDDLSFPKHEKDFHILSDYIETQGHYTISLSVFDDLYEEYTEWLKF.

Belongs to the UPF0346 family.

This chain is UPF0346 protein SSP1318, found in Staphylococcus saprophyticus subsp. saprophyticus (strain ATCC 15305 / DSM 20229 / NCIMB 8711 / NCTC 7292 / S-41).